An 87-amino-acid polypeptide reads, in one-letter code: U3-theraphotoxin-Hhn1a 5 (87 aa).

The signal sequence occupies residues 1–24 (MVNMKASMFLTFAGLVLLFVVCYA). A propeptide spanning residues 25 to 52 (SESEEKEFPKEMLSSIFAVDNDFKQEER) is cleaved from the precursor. 3 disulfides stabilise this stretch: Cys54–Cys67, Cys61–Cys72, and Cys66–Cys79.

This sequence belongs to the neurotoxin 10 (Hwtx-1) family. 51 (Hntx-8) subfamily. Hntx-8 sub-subfamily. Expressed by the venom gland.

It localises to the secreted. Its function is as follows. Ion channel inhibitor. This Cyriopagopus hainanus (Chinese bird spider) protein is U3-theraphotoxin-Hhn1a 5.